The sequence spans 171 residues: 3-hydroxydecanoyl-[acyl-carrier-protein] dehydratase (171 aa).

The active site involves His-70.

The protein belongs to the thioester dehydratase family. FabA subfamily. Homodimer.

It localises to the cytoplasm. It carries out the reaction a (3R)-hydroxyacyl-[ACP] = a (2E)-enoyl-[ACP] + H2O. It catalyses the reaction (3R)-hydroxydecanoyl-[ACP] = (2E)-decenoyl-[ACP] + H2O. The enzyme catalyses (2E)-decenoyl-[ACP] = (3Z)-decenoyl-[ACP]. Its pathway is lipid metabolism; fatty acid biosynthesis. Its function is as follows. Necessary for the introduction of cis unsaturation into fatty acids. Catalyzes the dehydration of (3R)-3-hydroxydecanoyl-ACP to E-(2)-decenoyl-ACP and then its isomerization to Z-(3)-decenoyl-ACP. Can catalyze the dehydratase reaction for beta-hydroxyacyl-ACPs with saturated chain lengths up to 16:0, being most active on intermediate chain length. This is 3-hydroxydecanoyl-[acyl-carrier-protein] dehydratase from Histophilus somni (strain 129Pt) (Haemophilus somnus).